We begin with the raw amino-acid sequence, 285 residues long: Iron uptake system component EfeM (285 aa).

The first 34 residues, M1 to A34, serve as a signal peptide directing secretion.

This sequence belongs to the EfeM/EfeO family. In terms of assembly, component of the iron transporter efeUOB/M complex composed of EfeU, EfeM and EfeB.

Its subcellular location is the periplasm. Functionally, part of the iron transporter system efeUOB/M involved in iron import. Specifically binds Fe(3+), which is produced by EfeB-mediated oxidation of Fe(2+), and delivers it to the cell inner membrane permease EfeU. Also binds Zn(2+) and Cu(2+) in vitro. The polypeptide is Iron uptake system component EfeM (Pseudomonas syringae pv. syringae (strain B728a)).